A 248-amino-acid polypeptide reads, in one-letter code: Regulator of G-protein signaling 7-binding protein A (248 aa).

The interval M1 to R32 is disordered. S-palmitoyl cysteine attachment occurs at residues C243 and C244.

This sequence belongs to the RGS7BP/RGS9BP family. Palmitoylated. Undergoes rapid palmitoylation turnover. Palmitoylation regulates the cell membrane and nuclear shuttling and the regulation of GPCR signaling. Upon depalmitoylation, it is targeted from the plasma membrane into the nucleus. GPCR signaling inhibits depalmitoylation and promotes localization to the plasma membrane.

The protein localises to the nucleus. Its subcellular location is the cytoplasm. It is found in the cell membrane. Regulator of G protein-coupled receptor (GPCR) signaling. Regulatory subunit of the R7-Gbeta5 complexes that acts by controlling the subcellular location of the R7-Gbeta5 complexes. When palmitoylated, it targets the R7-Gbeta5 complexes to the plasma membrane, leading to inhibit G protein alpha subunits. When it is unpalmitoylated, the R7-Gbeta5 complexes undergo a nuclear/cytoplasmic shuttling. The chain is Regulator of G-protein signaling 7-binding protein A (rgs7bpa) from Danio rerio (Zebrafish).